A 95-amino-acid polypeptide reads, in one-letter code: Small ribosomal subunit protein uS15 (95 aa).

This sequence belongs to the universal ribosomal protein uS15 family. As to quaternary structure, part of the 30S ribosomal subunit. Forms a bridge to the 50S subunit in the 70S ribosome, contacting the 23S rRNA.

In terms of biological role, one of the primary rRNA binding proteins, it binds directly to 16S rRNA where it helps nucleate assembly of the platform of the 30S subunit by binding and bridging several RNA helices of the 16S rRNA. Functionally, forms an intersubunit bridge (bridge B4) with the 23S rRNA of the 50S subunit in the ribosome. This is Small ribosomal subunit protein uS15 from Streptomyces coelicolor (strain ATCC BAA-471 / A3(2) / M145).